Here is a 349-residue protein sequence, read N- to C-terminus: Putative methylesterase 12, chloroplastic (349 aa).

The transit peptide at 1-77 (MGNRVICMKK…GSTSSRRGTL (77 aa)) directs the protein to the chloroplast. A disordered region spans residues 61-80 (GSMSRRIGSTSSRRGTLSDS). The active-site Acyl-ester intermediate is S173. Catalysis depends on charge relay system residues D300 and H328.

Belongs to the AB hydrolase superfamily. Methylesterase family.

It is found in the plastid. Its subcellular location is the chloroplast. In terms of biological role, putative methylesterase. The sequence is that of Putative methylesterase 12, chloroplastic from Arabidopsis thaliana (Mouse-ear cress).